Consider the following 403-residue polypeptide: Argininosuccinate synthase (403 aa).

Position 10-18 (10-18 (AYSGGLDTS)) interacts with ATP. Tyr87 lines the L-citrulline pocket. Gly117 lines the ATP pocket. Thr119, Asn123, and Asp124 together coordinate L-aspartate. Asn123 contacts L-citrulline. L-citrulline is bound by residues Arg127, Ser175, Ser184, Glu260, and Tyr272.

It belongs to the argininosuccinate synthase family. Type 1 subfamily. In terms of assembly, homotetramer.

It localises to the cytoplasm. The enzyme catalyses L-citrulline + L-aspartate + ATP = 2-(N(omega)-L-arginino)succinate + AMP + diphosphate + H(+). It participates in amino-acid biosynthesis; L-arginine biosynthesis; L-arginine from L-ornithine and carbamoyl phosphate: step 2/3. In Bacillus licheniformis (strain ATCC 14580 / DSM 13 / JCM 2505 / CCUG 7422 / NBRC 12200 / NCIMB 9375 / NCTC 10341 / NRRL NRS-1264 / Gibson 46), this protein is Argininosuccinate synthase.